The primary structure comprises 117 residues: Hainantoxin-XV (117 aa).

The first 20 residues, 1–20 (MKLCAVIIASLLVCVAVASS), serve as a signal peptide directing secretion. The tract at residues 20–55 (SSDNQKEFAQEKEMTREETQSLGEHEKDDEVTGSEE) is disordered. Residues 21–56 (SDNQKEFAQEKEMTREETQSLGEHEKDDEVTGSEER) constitute a propeptide that is removed on maturation. Positions 23–55 (NQKEFAQEKEMTREETQSLGEHEKDDEVTGSEE) are enriched in basic and acidic residues. 4 disulfides stabilise this stretch: Cys58–Cys72, Cys65–Cys78, Cys69–Cys115, and Cys71–Cys91.

Belongs to the neurotoxin 03 (Tx2) family. 02 subfamily. HNTX-XV sub-subfamily. In terms of tissue distribution, expressed by the venom gland.

The protein resides in the secreted. Functionally, putative ion channel inhibitor. In Cyriopagopus hainanus (Chinese bird spider), this protein is Hainantoxin-XV.